An 887-amino-acid polypeptide reads, in one-letter code: DNA mismatch repair protein MutS (887 aa).

Residue 621–628 coordinates ATP; it reads GPNMGGKS. Residues 828-853 form a disordered region; sequence AEPEPNKPAAAAKTKPASPQPDLFAS. Residues 834–848 are compositionally biased toward low complexity; the sequence is KPAAAAKTKPASPQP.

It belongs to the DNA mismatch repair MutS family.

In terms of biological role, this protein is involved in the repair of mismatches in DNA. It is possible that it carries out the mismatch recognition step. This protein has a weak ATPase activity. This Saccharophagus degradans (strain 2-40 / ATCC 43961 / DSM 17024) protein is DNA mismatch repair protein MutS.